Reading from the N-terminus, the 279-residue chain is Phosphatidylglycerol--prolipoprotein diacylglyceryl transferase (279 aa).

The next 7 helical transmembrane spans lie at 14 to 34 (IAFSLGSIEVHWYGLAYACAI), 62 to 82 (YFLWAELGIVLGARIGYILIY), 106 to 126 (FVGIRGMSYHGGLVGFLIASY), 136 to 156 (LLIYLDLIAISLPLGYVFGRI), 190 to 210 (PSQLIEAFLEGVIVFLMVMWA), 218 to 238 (GLLIVVYGLGYSLMRFIAEFY), and 252 to 272 (LSMGQILSLFMVIVSLGILLY). R155 serves as a coordination point for a 1,2-diacyl-sn-glycero-3-phospho-(1'-sn-glycerol).

It belongs to the Lgt family.

It is found in the cell inner membrane. It carries out the reaction L-cysteinyl-[prolipoprotein] + a 1,2-diacyl-sn-glycero-3-phospho-(1'-sn-glycerol) = an S-1,2-diacyl-sn-glyceryl-L-cysteinyl-[prolipoprotein] + sn-glycerol 1-phosphate + H(+). It functions in the pathway protein modification; lipoprotein biosynthesis (diacylglyceryl transfer). Functionally, catalyzes the transfer of the diacylglyceryl group from phosphatidylglycerol to the sulfhydryl group of the N-terminal cysteine of a prolipoprotein, the first step in the formation of mature lipoproteins. In Helicobacter pylori (strain HPAG1), this protein is Phosphatidylglycerol--prolipoprotein diacylglyceryl transferase.